Here is a 448-residue protein sequence, read N- to C-terminus: tRNA modification GTPase MnmE (448 aa).

Positions 24, 81, and 120 each coordinate (6S)-5-formyl-5,6,7,8-tetrahydrofolate. Positions 216-373 (GLNVVLVGAP…LKRTLLREAG (158 aa)) constitute a TrmE-type G domain. Residue Asn226 coordinates K(+). GTP contacts are provided by residues 226–231 (NVGKSS), 245–251 (TDIAGTT), and 270–273 (DTAG). Ser230 contributes to the Mg(2+) binding site. Residues Thr245, Ile247, and Thr250 each contribute to the K(+) site. Residue Thr251 participates in Mg(2+) binding. Lys448 serves as a coordination point for (6S)-5-formyl-5,6,7,8-tetrahydrofolate.

This sequence belongs to the TRAFAC class TrmE-Era-EngA-EngB-Septin-like GTPase superfamily. TrmE GTPase family. As to quaternary structure, homodimer. Heterotetramer of two MnmE and two MnmG subunits. K(+) serves as cofactor.

It localises to the cytoplasm. Exhibits a very high intrinsic GTPase hydrolysis rate. Involved in the addition of a carboxymethylaminomethyl (cmnm) group at the wobble position (U34) of certain tRNAs, forming tRNA-cmnm(5)s(2)U34. The sequence is that of tRNA modification GTPase MnmE from Neisseria meningitidis serogroup B (strain ATCC BAA-335 / MC58).